Reading from the N-terminus, the 221-residue chain is uncharacterized protein (221 aa).

The 189-residue stretch at 1–189 (MDSGKDTNGY…NVVYCSEKAV (189 aa)) folds into the Peptidase S8 domain.

The protein belongs to the peptidase S8 family.

This is an uncharacterized protein from Aquifex aeolicus (strain VF5).